We begin with the raw amino-acid sequence, 588 residues long: Calicin (588 aa).

The 71-residue stretch at 28-98 (WDMALTVDHH…FYSGKVVISE (71 aa)) folds into the BTB domain. A BACK domain is found at 133–235 (CLRYLFLAEL…NAVSNKTLMF (103 aa)). A Phosphoserine modification is found at serine 149. 6 Kelch repeats span residues 280–327 (SVVI…AAGR), 328–375 (YIYI…TCGG), 377–423 (VYSV…TKGD), 425–475 (NLYI…SFHQ), 476–525 (DNIL…IGDS), and 526–580 (KVFV…LAKL).

Interacts with CYLC1; the interaction may be relevant for proper acrosome attachment to the nuclear envelope. In terms of tissue distribution, expressed in testis and in spermatozoa.

The protein resides in the cytoplasm. It localises to the cytoskeleton. It is found in the perinuclear theca. The protein localises to the calyx. Required for both nuclear and acrosomal shaping during spermiogenesis. This chain is Calicin (Ccin), found in Mus musculus (Mouse).